The primary structure comprises 318 residues: NADH-ubiquinone oxidoreductase chain 1 (318 aa).

A run of 8 helical transmembrane segments spans residues phenylalanine 2–leucine 22, threonine 76–isoleucine 96, phenylalanine 98–tryptophan 118, isoleucine 140–phenylalanine 160, histidine 171–alanine 191, alanine 217–leucine 237, glutamate 253–isoleucine 273, and leucine 294–isoleucine 314.

This sequence belongs to the complex I subunit 1 family. As to quaternary structure, core subunit of respiratory chain NADH dehydrogenase (Complex I) which is composed of 45 different subunits.

It localises to the mitochondrion inner membrane. It carries out the reaction a ubiquinone + NADH + 5 H(+)(in) = a ubiquinol + NAD(+) + 4 H(+)(out). In terms of biological role, core subunit of the mitochondrial membrane respiratory chain NADH dehydrogenase (Complex I) which catalyzes electron transfer from NADH through the respiratory chain, using ubiquinone as an electron acceptor. Essential for the catalytic activity and assembly of complex I. The protein is NADH-ubiquinone oxidoreductase chain 1 (MT-ND1) of Ateles paniscus (Black spider monkey).